The chain runs to 121 residues: Large ribosomal subunit protein bL20 (121 aa).

This sequence belongs to the bacterial ribosomal protein bL20 family.

Its function is as follows. Binds directly to 23S ribosomal RNA and is necessary for the in vitro assembly process of the 50S ribosomal subunit. It is not involved in the protein synthesizing functions of that subunit. In Orientia tsutsugamushi (strain Boryong) (Rickettsia tsutsugamushi), this protein is Large ribosomal subunit protein bL20.